A 229-amino-acid chain; its full sequence is MEQEVYTALTFVELTTVHYQHDDPFGLFNAYVTLIPIAIAIGVITLILFRRDVRTISIFLGLLFSECTNYVLKKSIKEHRPTMWKELRKQSYGMPSSHSQFMFFFAVLMTLFYLKKRIRFGSKILPIISVTFLFFLAAGVAYSRVHLYYHTAKQVFCGSFIGICLGFIWYGVIEYIFRPYLFPIIINHPIGKYFYLRDSSEIEDLLNFEYTNVMNKVKTINKTKPIKTK.

4 helical membrane passes run 27 to 47, 94 to 114, 120 to 140, and 156 to 176; these read LFNA…ITLI, MPSS…LFYL, FGSK…AAGV, and FCGS…IEYI.

Belongs to the dolichyldiphosphatase family.

The protein resides in the endoplasmic reticulum membrane. The catalysed reaction is a di-trans,poly-cis-dolichyl diphosphate + H2O = a di-trans,poly-cis-dolichyl phosphate + phosphate + H(+). It functions in the pathway protein modification; protein glycosylation. Required for efficient N-glycosylation. Necessary for maintaining optimal levels of dolichol-linked oligosaccharides. Hydrolyzes dolichyl pyrophosphate at a very high rate and dolichyl monophosphate at a much lower rate. Does not act on phosphatidate. This is Dolichyldiphosphatase 1 (dolpp1) from Dictyostelium discoideum (Social amoeba).